The following is a 223-amino-acid chain: Urease accessory protein UreF (223 aa).

The protein belongs to the UreF family. UreD, UreF and UreG form a complex that acts as a GTP-hydrolysis-dependent molecular chaperone, activating the urease apoprotein by helping to assemble the nickel containing metallocenter of UreC. The UreE protein probably delivers the nickel.

It is found in the cytoplasm. Its function is as follows. Required for maturation of urease via the functional incorporation of the urease nickel metallocenter. This chain is Urease accessory protein UreF, found in Rhizobium johnstonii (strain DSM 114642 / LMG 32736 / 3841) (Rhizobium leguminosarum bv. viciae).